The following is a 71-amino-acid chain: MDKTTVYLPDELKAAVKRAARQRGVSEAQVIRESIRAAVGGAKPPPRGGLYAGSEPIARRVDELLAGFGER.

In terms of biological role, antitoxin component of a type II toxin-antitoxin (TA) system. Upon expression in M.smegmatis neutralizes the effect of cognate toxin VapC26. This chain is Antitoxin VapB26 (vapB26), found in Mycobacterium tuberculosis (strain ATCC 25618 / H37Rv).